The chain runs to 472 residues: Dihydrolipoyl dehydrogenase 2 (472 aa).

FAD-binding positions include 39–47 (ERDAYGGTC), lysine 56, and alanine 118. A disulfide bridge links cysteine 47 with cysteine 52. NAD(+) is bound by residues 186–190 (GAGYI), glutamate 209, and 275–278 (AVGR). FAD is bound by residues aspartate 318 and alanine 326. The active-site Proton acceptor is histidine 450.

This sequence belongs to the class-I pyridine nucleotide-disulfide oxidoreductase family. Homodimer. FAD serves as cofactor.

It is found in the cytoplasm. The enzyme catalyses N(6)-[(R)-dihydrolipoyl]-L-lysyl-[protein] + NAD(+) = N(6)-[(R)-lipoyl]-L-lysyl-[protein] + NADH + H(+). In Haloarcula marismortui (strain ATCC 43049 / DSM 3752 / JCM 8966 / VKM B-1809) (Halobacterium marismortui), this protein is Dihydrolipoyl dehydrogenase 2 (lpdA2).